The following is a 315-amino-acid chain: T-box transcription factor tbx-8 (315 aa).

The T-box DNA-binding region spans 11-195; that stretch reads EDQDKLWNLF…FNPFAKGFRE (185 aa). Residues 193–203 show a composition bias toward basic and acidic residues; sequence FREGSQSDRKR. 2 disordered regions span residues 193 to 235 and 293 to 315; these read FREG…SVSP and PPPS…INVV. Residues 205–225 show a composition bias toward low complexity; it reads SPSADDSTTDESSSQVSSPQP. Acidic residues predominate over residues 305–315; that stretch reads QEDIEQEINVV.

It is found in the nucleus. Functionally, transcription factor. Involved in the control of early morphogenesis of the intestine, hypodermis and body-wall muscle. Involved in regulating expression of vab-7. Appears to have partially redundant function to tbx-9. The protein is T-box transcription factor tbx-8 (tbx-8) of Caenorhabditis elegans.